The following is a 370-amino-acid chain: 3-dehydroquinate synthase (370 aa).

NAD(+) contacts are provided by residues 108-112 (GVIGD), 132-133 (TT), Lys-145, and Lys-154. Zn(2+) contacts are provided by Glu-187, His-249, and His-267.

This sequence belongs to the sugar phosphate cyclases superfamily. Dehydroquinate synthase family. It depends on Co(2+) as a cofactor. Zn(2+) is required as a cofactor. Requires NAD(+) as cofactor.

It is found in the cytoplasm. The catalysed reaction is 7-phospho-2-dehydro-3-deoxy-D-arabino-heptonate = 3-dehydroquinate + phosphate. Its pathway is metabolic intermediate biosynthesis; chorismate biosynthesis; chorismate from D-erythrose 4-phosphate and phosphoenolpyruvate: step 2/7. Functionally, catalyzes the conversion of 3-deoxy-D-arabino-heptulosonate 7-phosphate (DAHP) to dehydroquinate (DHQ). In Cereibacter sphaeroides (strain KD131 / KCTC 12085) (Rhodobacter sphaeroides), this protein is 3-dehydroquinate synthase.